The chain runs to 484 residues: NADH-quinone oxidoreductase subunit N (484 aa).

The next 14 helical transmembrane spans lie at 11-31 (SLWI…VLLI), 42-62 (VTYY…FNLI), 79-98 (MASV…MVYS), 113-133 (FVLV…YSLL), 134-154 (TLYL…AIAR), 167-187 (FVLG…IYGI), 211-231 (LIIN…LGAV), 248-268 (VTLF…VRIL), 279-299 (WSDL…VVAL), 313-333 (ISHV…GYGA), 335-355 (AFYM…IILL), 378-398 (FALM…LVGF), 408-428 (VVSA…VISA), and 457-477 (LVLS…DFWM).

The protein belongs to the complex I subunit 2 family. NDH-1 is composed of 14 different subunits. Subunits NuoA, H, J, K, L, M, N constitute the membrane sector of the complex.

The protein localises to the cell inner membrane. It catalyses the reaction a quinone + NADH + 5 H(+)(in) = a quinol + NAD(+) + 4 H(+)(out). NDH-1 shuttles electrons from NADH, via FMN and iron-sulfur (Fe-S) centers, to quinones in the respiratory chain. The immediate electron acceptor for the enzyme in this species is believed to be ubiquinone. Couples the redox reaction to proton translocation (for every two electrons transferred, four hydrogen ions are translocated across the cytoplasmic membrane), and thus conserves the redox energy in a proton gradient. The sequence is that of NADH-quinone oxidoreductase subunit N from Ruthia magnifica subsp. Calyptogena magnifica.